The primary structure comprises 87 residues: Small ribosomal subunit protein bS20 (87 aa).

The tract at residues 1–22 (MANSAQARKRARQAVKQRAHNA) is disordered. Residues 7 to 19 (ARKRARQAVKQRA) show a composition bias toward basic residues.

It belongs to the bacterial ribosomal protein bS20 family.

Functionally, binds directly to 16S ribosomal RNA. This Methylobacillus flagellatus (strain ATCC 51484 / DSM 6875 / VKM B-1610 / KT) protein is Small ribosomal subunit protein bS20.